The following is a 246-amino-acid chain: Small ribosomal subunit protein uS2 (246 aa).

The protein belongs to the universal ribosomal protein uS2 family.

The chain is Small ribosomal subunit protein uS2 from Pseudomonas paraeruginosa (strain DSM 24068 / PA7) (Pseudomonas aeruginosa (strain PA7)).